Here is a 36-residue protein sequence, read N- to C-terminus: Pancreatic polypeptide (36 aa).

Tyr-36 is subject to Tyrosine amide.

It belongs to the NPY family.

It is found in the secreted. Functionally, hormone secreted by pancreatic cells that acts as a regulator of pancreatic and gastrointestinal functions probably by signaling through the G protein-coupled receptor NPY4R2. The protein is Pancreatic polypeptide (PPY) of Macaca mulatta (Rhesus macaque).